A 107-amino-acid polypeptide reads, in one-letter code: U1-lycotoxin-Ls1g (107 aa).

An N-terminal signal peptide occupies residues 1-20; it reads MMKVLVVVALLVTLISYSSS. The propeptide occupies 21 to 41; that stretch reads EGIDDLEADELLSLMANEQTR. 3 disulfide bridges follow: Cys51-Cys68, Cys58-Cys86, and Cys70-Cys84.

This sequence belongs to the neurotoxin 19 (CSTX) family. 04 (U1-Lctx) subfamily. As to expression, expressed by the venom gland.

It is found in the secreted. In Lycosa singoriensis (Wolf spider), this protein is U1-lycotoxin-Ls1g.